Reading from the N-terminus, the 369-residue chain is Transforming protein Maf (369 aa).

Disordered stretches follow at residues 57-85 and 169-243; these read STPM…TDQK and GGAP…GLHF. The span at 173 to 183 shows a compositional bias: basic residues; it reads HYHHHHHHPHH. Over residues 184–193 the composition is skewed to gly residues; sequence GGGGGGGGHP. The span at 194–211 shows a compositional bias: low complexity; sequence HGAAPGSAPPSSASSSAA. Residues 212–226 are compositionally biased toward gly residues; that stretch reads GSGGGGGGGGGGAGG. The tract at residues 274 to 299 is basic motif; the sequence is RLKQKRRTLKNRGYAQSCRFKRVQQR. A bZIP domain is found at 274 to 337; that stretch reads RLKQKRRTLK…DAYKEKYEKL (64 aa). The segment at 302-323 is leucine-zipper; it reads LESEKNQLLQQVEHLKQEISRL. The segment at 341–369 is disordered; that stretch reads GFRENGSSSDNPSSPEFFMYPRESSTTVM. Positions 345 to 354 are enriched in polar residues; that stretch reads NGSSSDNPSS.

The protein belongs to the bZIP family. Maf subfamily.

It is found in the host nucleus. Its function is as follows. Might be a transcriptional trans-activator. This Galliformes protein is Transforming protein Maf (V-MAF).